A 238-amino-acid polypeptide reads, in one-letter code: CASP-like protein 2BC2 (238 aa).

The Cytoplasmic portion of the chain corresponds to 1–66 (MPSSTYPRRR…FHQKVAVEKR (66 aa)). The chain crosses the membrane as a helical span at residues 67–87 (LKIGEVILRFAMIALALVAAV). Over 88–111 (RVGTDTQTRTIFTIEKKAKYSDMK) the chain is Extracellular. Residues 112 to 132 (ALVFLVVMNGIVASYSLLQGL) traverse the membrane as a helical segment. The Cytoplasmic segment spans residues 133–148 (RCVLSIYTQSPLTSKP). Residues 149–169 (LAWLIFALDQTMAYFSLAAAA) traverse the membrane as a helical segment. The Extracellular portion of the chain corresponds to 170–200 (AAAESAYLAERGQTEFQWMKVCIFYEKFCHQ). A helical transmembrane segment spans residues 201-221 (IGEGLVSTFLVSLSMATVSGM). Over 222–238 (SAYHLFRLYGSKGKSIQ) the chain is Cytoplasmic.

Belongs to the Casparian strip membrane proteins (CASP) family. As to quaternary structure, homodimer and heterodimers.

Its subcellular location is the cell membrane. This chain is CASP-like protein 2BC2, found in Picea sitchensis (Sitka spruce).